The primary structure comprises 254 residues: Ditrans,polycis-undecaprenyl-diphosphate synthase ((2E,6E)-farnesyl-diphosphate specific) (254 aa).

Asp25 is a catalytic residue. Asp25 provides a ligand contact to Mg(2+). Residues Gly26–Arg29, Trp30, Arg38, His42, and Ser70–Glu72 each bind substrate. The active-site Proton acceptor is Asn73. 3 residues coordinate substrate: Trp74, Arg76, and Arg193. His198 is a Mg(2+) binding site. Arg199 to Ser201 is a substrate binding site. Glu212 serves as a coordination point for Mg(2+).

It belongs to the UPP synthase family. In terms of assembly, homodimer. Requires Mg(2+) as cofactor.

It carries out the reaction 8 isopentenyl diphosphate + (2E,6E)-farnesyl diphosphate = di-trans,octa-cis-undecaprenyl diphosphate + 8 diphosphate. Catalyzes the sequential condensation of isopentenyl diphosphate (IPP) with (2E,6E)-farnesyl diphosphate (E,E-FPP) to yield (2Z,6Z,10Z,14Z,18Z,22Z,26Z,30Z,34E,38E)-undecaprenyl diphosphate (di-trans,octa-cis-UPP). UPP is the precursor of glycosyl carrier lipid in the biosynthesis of bacterial cell wall polysaccharide components such as peptidoglycan and lipopolysaccharide. The protein is Ditrans,polycis-undecaprenyl-diphosphate synthase ((2E,6E)-farnesyl-diphosphate specific) of Photorhabdus laumondii subsp. laumondii (strain DSM 15139 / CIP 105565 / TT01) (Photorhabdus luminescens subsp. laumondii).